Reading from the N-terminus, the 367-residue chain is Putative isomerase YraM (367 aa).

Belongs to the PrpF family.

The protein is Putative isomerase YraM (yraM) of Bacillus subtilis (strain 168).